Here is a 204-residue protein sequence, read N- to C-terminus: Thymidylate kinase (204 aa).

It belongs to the thymidylate kinase family. Homodimer; the dimer arrangement is orthogonal and not antiparallel as in human enzyme.

The catalysed reaction is dTMP + ATP = dTDP + ADP. It functions in the pathway pyrimidine metabolism; dTTP biosynthesis. Functionally, poxvirus TMP kinase is able to phosphorylate dTMP, dUMP and also dGMP from any purine and pyrimidine nucleoside triphosphate. The large substrate specificity is explained by the presence of a canal connecting the edge of the dimer interface to the TMP base binding pocket, canal not found in the human homolog. The protein is Thymidylate kinase (OPG178) of Cynomys gunnisoni (Gunnison's prairie dog).